The sequence spans 67 residues: Beta-mammal toxin CeII9 (67 aa).

Residues 1 to 66 (KEGYLVNHST…VWPLPKKTCN (66 aa)) enclose the LCN-type CS-alpha/beta domain. Disulfide bonds link Cys12-Cys65, Cys16-Cys41, Cys25-Cys46, and Cys29-Cys48.

This sequence belongs to the long (4 C-C) scorpion toxin superfamily. Sodium channel inhibitor family. Beta subfamily. Expressed by the venom gland.

Its subcellular location is the secreted. Beta toxins bind at site-4 of sodium channels and shift the voltage of activation toward more negative potentials thereby affecting sodium channel activation and promoting spontaneous and repetitive firing. This toxin is active against mammals and lethal to mice. Selectively modulates Nav1.4/SCN4A, a sodium channel present in both denervated and innervated skeletal muscle. The polypeptide is Beta-mammal toxin CeII9 (Centruroides elegans (Bark scorpion)).